Reading from the N-terminus, the 129-residue chain is UPF0102 protein CT2262 (129 aa).

It belongs to the UPF0102 family.

This Chlorobaculum tepidum (strain ATCC 49652 / DSM 12025 / NBRC 103806 / TLS) (Chlorobium tepidum) protein is UPF0102 protein CT2262.